A 271-amino-acid polypeptide reads, in one-letter code: GPN-loop GTPase 3 (271 aa).

13-18 (GVGKST) lines the GTP pocket. A Gly-Pro-Asn (GPN)-loop; involved in dimer interface motif is present at residues 70 to 72 (GPN). 173–176 (SKMD) contacts GTP.

It belongs to the GPN-loop GTPase family. Heterodimers with GPN1 or GPN2. Binds to RNA polymerase II (RNAPII).

Small GTPase required for proper nuclear import of RNA polymerase II and III (RNAPII and RNAPIII). May act at an RNAP assembly step prior to nuclear import. In Yarrowia lipolytica (strain CLIB 122 / E 150) (Yeast), this protein is GPN-loop GTPase 3.